The sequence spans 164 residues: NADH-quinone oxidoreductase subunit I (164 aa).

4Fe-4S ferredoxin-type domains are found at residues 55-85 (LRRY…IDAE) and 95-124 (TRYD…EGPN). Residues cysteine 65, cysteine 68, cysteine 71, cysteine 75, cysteine 104, cysteine 107, cysteine 110, and cysteine 114 each contribute to the [4Fe-4S] cluster site.

The protein belongs to the complex I 23 kDa subunit family. As to quaternary structure, NDH-1 is composed of 14 different subunits. Subunits NuoA, H, J, K, L, M, N constitute the membrane sector of the complex. Requires [4Fe-4S] cluster as cofactor.

The protein resides in the cell inner membrane. It catalyses the reaction a quinone + NADH + 5 H(+)(in) = a quinol + NAD(+) + 4 H(+)(out). Its function is as follows. NDH-1 shuttles electrons from NADH, via FMN and iron-sulfur (Fe-S) centers, to quinones in the respiratory chain. The immediate electron acceptor for the enzyme in this species is believed to be ubiquinone. Couples the redox reaction to proton translocation (for every two electrons transferred, four hydrogen ions are translocated across the cytoplasmic membrane), and thus conserves the redox energy in a proton gradient. This chain is NADH-quinone oxidoreductase subunit I, found in Jannaschia sp. (strain CCS1).